Reading from the N-terminus, the 181-residue chain is Ferritin heavy chain (181 aa).

Residues 10–159 (QNYHQDCEAA…DHVTNLRKMG (150 aa)) enclose the Ferritin-like diiron domain. Positions 27, 62, 65, 107, and 141 each coordinate Fe cation.

The protein belongs to the ferritin family. In terms of assembly, oligomer of 24 subunits. There are two types of subunits: L (light) chain and H (heavy) chain. The major chain can be light or heavy, depending on the species and tissue type. The functional molecule forms a roughly spherical shell with a diameter of 12 nm and contains a central cavity into which the insoluble mineral iron core is deposited. In terms of tissue distribution, expressed in erythroblasts (at protein level). Expressed in heart, liver, spleen, lung, kidney, large intestine, small intestine, muscle, glandular stomach, ovary and oviduct.

Its subcellular location is the cytoplasm. The protein localises to the lysosome. It localises to the cytoplasmic vesicle. It is found in the autophagosome. The enzyme catalyses 4 Fe(2+) + O2 + 4 H(+) = 4 Fe(3+) + 2 H2O. Stores iron in a soluble, non-toxic, readily available form. Important for iron homeostasis. Has ferroxidase activity. Iron is taken up in the ferrous form and deposited as ferric hydroxides after oxidation. Also plays a role in delivery of iron to cells. Mediates iron uptake in capsule cells of the developing kidney. Delivery to lysosomes is mediated by the cargo receptor NCOA4 for autophagic degradation and release of iron. Its function is as follows. Inhibits translation of various mRNA species in vitro. Associates with a 35S prosome-like particle that contains non-translated mRNAs in a complex with proteins. May be involved in pre-translational regulation of some mRNA. The polypeptide is Ferritin heavy chain (Anas platyrhynchos (Mallard)).